A 412-amino-acid chain; its full sequence is Squamosa promoter-binding-like protein 2 (412 aa).

The segment at 1-81 (MDWDAKMPSW…AAAAGKRARA (81 aa)) is disordered. Gly residues predominate over residues 18–31 (PSGGGGGGGGGGGA). 2 stretches are compositionally biased toward low complexity: residues 48–57 (VSAASAAPAA) and 67–81 (SSSS…RARA). An SBP-type zinc finger spans residues 89–167 (VPACSVEGCA…DGHNKRRRKP (79 aa)). Zn(2+) is bound by residues cysteine 92, cysteine 97, cysteine 115, histidine 118, cysteine 134, cysteine 137, histidine 141, and cysteine 153. The short motif at 150-166 (KRSCRKRLDGHNKRRRK) is the Bipartite nuclear localization signal element.

As to expression, expressed in stems, leaf sheaths, and young panicles.

It localises to the nucleus. Trans-acting factor that binds specifically to the consensus nucleotide sequence 5'-TNCGTACAA-3'. May be involved in panicle development. This is Squamosa promoter-binding-like protein 2 (SPL2) from Oryza sativa subsp. japonica (Rice).